The chain runs to 104 residues: Pterin-4-alpha-carbinolamine dehydratase (104 aa).

Alanine 2 is subject to N-acetylalanine. Substrate contacts are provided by residues 61-63 (DHH) and 78-81 (STHE).

This sequence belongs to the pterin-4-alpha-carbinolamine dehydratase family. Homotetramer and homodimer. Heterotetramer with HNF1A; formed by a dimer of dimers. Interacts with HNF1B (via HNF-p1 domain); the interaction increases HNF1B transactivation activity. Mainly expressed in the liver, in pancreatic cells, and in the kidney, especially in the distal convoluted tubule, in the cortical thick ascending limb of Henle's loop and in the connecting tubule.

The protein localises to the cytoplasm. It localises to the nucleus. The enzyme catalyses (4aS,6R)-4a-hydroxy-L-erythro-5,6,7,8-tetrahydrobiopterin = (6R)-L-erythro-6,7-dihydrobiopterin + H2O. Involved in tetrahydrobiopterin biosynthesis. Seems to both prevent the formation of 7-pterins and accelerate the formation of quinonoid-BH2. Coactivator for HNF1A-dependent transcription. Regulates the dimerization of homeodomain protein HNF1A and enhances its transcriptional activity. Also acts as a coactivator for HNF1B-dependent transcription. The protein is Pterin-4-alpha-carbinolamine dehydratase (Pcbd1) of Mus musculus (Mouse).